A 456-amino-acid chain; its full sequence is CBL-interacting protein kinase 16 (456 aa).

A Protein kinase domain is found at 22 to 277 (YELGRLLGQG…IPEIMRTPWF (256 aa)). ATP is bound by residues 28-36 (LGQGTFAKV) and lysine 51. Aspartate 145 acts as the Proton acceptor in catalysis. An activation loop region spans residues 163–192 (DFGLAALPEQLRQDGLLHTQCGTPAYVAPE). Positions 309–335 (AMSPRTCNAFQLISSMSSGFDLSGMFE) constitute an NAF domain. Residues 339–368 (KAATVFTSRAPAATVIQKLEAVGRSLGYSA) are PPI.

The protein belongs to the protein kinase superfamily. CAMK Ser/Thr protein kinase family. SNF1 subfamily. The cofactor is Mn(2+).

It carries out the reaction L-seryl-[protein] + ATP = O-phospho-L-seryl-[protein] + ADP + H(+). The catalysed reaction is L-threonyl-[protein] + ATP = O-phospho-L-threonyl-[protein] + ADP + H(+). Its function is as follows. CIPK serine-threonine protein kinases interact with CBL proteins. Binding of a CBL protein to the regulatory NAF domain of CIPK protein lead to the activation of the kinase in a calcium-dependent manner. In Oryza sativa subsp. japonica (Rice), this protein is CBL-interacting protein kinase 16 (CIPK16).